The following is a 487-amino-acid chain: Protein nucleotidyltransferase YdiU (487 aa).

ATP contacts are provided by G90, G92, R93, K113, D125, G126, R176, and R183. D252 serves as the catalytic Proton acceptor. Mg(2+) contacts are provided by N253 and D262. D262 provides a ligand contact to ATP.

The protein belongs to the SELO family. Mg(2+) is required as a cofactor. Requires Mn(2+) as cofactor.

It carries out the reaction L-seryl-[protein] + ATP = 3-O-(5'-adenylyl)-L-seryl-[protein] + diphosphate. The enzyme catalyses L-threonyl-[protein] + ATP = 3-O-(5'-adenylyl)-L-threonyl-[protein] + diphosphate. The catalysed reaction is L-tyrosyl-[protein] + ATP = O-(5'-adenylyl)-L-tyrosyl-[protein] + diphosphate. It catalyses the reaction L-histidyl-[protein] + UTP = N(tele)-(5'-uridylyl)-L-histidyl-[protein] + diphosphate. It carries out the reaction L-seryl-[protein] + UTP = O-(5'-uridylyl)-L-seryl-[protein] + diphosphate. The enzyme catalyses L-tyrosyl-[protein] + UTP = O-(5'-uridylyl)-L-tyrosyl-[protein] + diphosphate. In terms of biological role, nucleotidyltransferase involved in the post-translational modification of proteins. It can catalyze the addition of adenosine monophosphate (AMP) or uridine monophosphate (UMP) to a protein, resulting in modifications known as AMPylation and UMPylation. The chain is Protein nucleotidyltransferase YdiU from Pseudomonas fluorescens (strain SBW25).